The sequence spans 166 residues: NAD(P)H-quinone oxidoreductase subunit I, chloroplastic (166 aa).

4Fe-4S ferredoxin-type domains lie at 55-84 (GRIHFEFDKCIACEVCVRVCPIDLPVVDWK) and 95-124 (LNYSIDFGICIFCGNCVEYCPTNCLSMTEE). The [4Fe-4S] cluster site is built by cysteine 64, cysteine 67, cysteine 70, cysteine 74, cysteine 104, cysteine 107, cysteine 110, and cysteine 114.

Belongs to the complex I 23 kDa subunit family. NDH is composed of at least 16 different subunits, 5 of which are encoded in the nucleus. [4Fe-4S] cluster serves as cofactor.

The protein localises to the plastid. It is found in the chloroplast thylakoid membrane. The enzyme catalyses a plastoquinone + NADH + (n+1) H(+)(in) = a plastoquinol + NAD(+) + n H(+)(out). It carries out the reaction a plastoquinone + NADPH + (n+1) H(+)(in) = a plastoquinol + NADP(+) + n H(+)(out). Its function is as follows. NDH shuttles electrons from NAD(P)H:plastoquinone, via FMN and iron-sulfur (Fe-S) centers, to quinones in the photosynthetic chain and possibly in a chloroplast respiratory chain. The immediate electron acceptor for the enzyme in this species is believed to be plastoquinone. Couples the redox reaction to proton translocation, and thus conserves the redox energy in a proton gradient. This is NAD(P)H-quinone oxidoreductase subunit I, chloroplastic from Calea megacephala.